We begin with the raw amino-acid sequence, 289 residues long: 4-diphosphocytidyl-2-C-methyl-D-erythritol kinase (289 aa).

K11 is a catalytic residue. 93–103 provides a ligand contact to ATP; the sequence is PLAAGLAGGSA. D135 is an active-site residue.

This sequence belongs to the GHMP kinase family. IspE subfamily.

It carries out the reaction 4-CDP-2-C-methyl-D-erythritol + ATP = 4-CDP-2-C-methyl-D-erythritol 2-phosphate + ADP + H(+). It functions in the pathway isoprenoid biosynthesis; isopentenyl diphosphate biosynthesis via DXP pathway; isopentenyl diphosphate from 1-deoxy-D-xylulose 5-phosphate: step 3/6. Functionally, catalyzes the phosphorylation of the position 2 hydroxy group of 4-diphosphocytidyl-2C-methyl-D-erythritol. In Thermoanaerobacter pseudethanolicus (strain ATCC 33223 / 39E) (Clostridium thermohydrosulfuricum), this protein is 4-diphosphocytidyl-2-C-methyl-D-erythritol kinase.